A 142-amino-acid chain; its full sequence is Ninjurin-2 (142 aa).

The segment at 1–21 is disordered; it reads MESARENIDLQPGSSDPRSQP. Residues 1–60 lie on the Extracellular side of the membrane; sequence MESARENIDLQPGSSDPRSQPINLNHYATKKSVAESMLDVALFMSNAMRLKAVLEQGPSS. A compositionally biased stretch (polar residues) spans 12–21; sequence PGSSDPRSQP. Residues 25–37 form a helix alpha1 region; sequence NHYATKKSVAESM. The helix alpha2 stretch occupies residues 38-57; it reads LDVALFMSNAMRLKAVLEQG. Residues 61-92 traverse the membrane as a helical segment; the sequence is HYYTTLVTLISLSLLLQVVIGVLLVVIARLNL. Over 93-96 the chain is Cytoplasmic; it reads NEVE. The helical transmembrane segment at 97 to 126 threads the bilayer; it reads KQWRLNQLNNAATILVFFTVVINVFITAFG. Glutamine 103 lines the cholesterol pocket. At 127 to 142 the chain is on the extracellular side; sequence AHKTGFLAARASRNPL.

The protein belongs to the ninjurin family. Homooligomer; in response to stimuli, homooligomerizes into filaments. In contrast to NINJ1, the filament is curved toward the intracellular space, preventing its circularization on a relatively flat membrane to mediate plasma membrane rupture: curvature is caused by cholesterol-binding at the cytoplasmic leaflet. Widely expressed. In adult, higher expression in the bone marrow and peripheral blood lymphocytes, medium in the lung, lymph node, thyroid, uterus, thymus, spleen, prostate and skeletal muscle, lower in the liver, placenta, brain, heart and kidney. In embryo, higher expression in the thymus, heart and liver, lower in the spleen, lung, brain and kidney.

The protein localises to the cell membrane. In terms of biological role, its role in unclear. In contrast to NINJ1 paralog, does not mediate plasma membrane rupture (cytolysis) downstream of necroptotic and pyroptotic programmed cell death. While it is able to oligomerize and form filaments, filaments are curved toward the intracellular space, preventing circularization to mediate plasma membrane rupture. May act as a homophilic transmembrane adhesion molecule involved in nerve regeneration. Promotes axonal growth. The chain is Ninjurin-2 from Homo sapiens (Human).